Consider the following 438-residue polypeptide: Serine--tRNA ligase (438 aa).

Residue 235–237 (TAE) coordinates L-serine. ATP-binding positions include 266–268 (RKE) and valine 282. Position 289 (glutamate 289) interacts with L-serine. 355–358 (ELVS) contributes to the ATP binding site. Threonine 393 lines the L-serine pocket.

The protein belongs to the class-II aminoacyl-tRNA synthetase family. Type-1 seryl-tRNA synthetase subfamily. In terms of assembly, homodimer. The tRNA molecule binds across the dimer.

It carries out the reaction tRNA(Ser) + L-serine + ATP = L-seryl-tRNA(Ser) + AMP + diphosphate + H(+). The enzyme catalyses tRNA(Sec) + L-serine + ATP = L-seryl-tRNA(Sec) + AMP + diphosphate + H(+). The protein operates within aminoacyl-tRNA biosynthesis; selenocysteinyl-tRNA(Sec) biosynthesis; L-seryl-tRNA(Sec) from L-serine and tRNA(Sec): step 1/1. In terms of biological role, catalyzes the attachment of serine to tRNA(Ser). Is also able to aminoacylate tRNA(Sec) with serine, to form the misacylated tRNA L-seryl-tRNA(Sec), which will be further converted into selenocysteinyl-tRNA(Sec). The sequence is that of Serine--tRNA ligase from Helianthus annuus (Common sunflower).